The sequence spans 391 residues: UPF0229 protein CA_C0580 (391 aa).

2 disordered regions span residues 1–20 (MAIF…TIGD) and 75–109 (VGSG…NSEG). Residues 96 to 106 (GSKGKGKGAGN) are compositionally biased toward gly residues.

The protein belongs to the UPF0229 family.

The polypeptide is UPF0229 protein CA_C0580 (Clostridium acetobutylicum (strain ATCC 824 / DSM 792 / JCM 1419 / IAM 19013 / LMG 5710 / NBRC 13948 / NRRL B-527 / VKM B-1787 / 2291 / W)).